The primary structure comprises 447 residues: Enolase (447 aa).

Position 168 (Gln168) interacts with (2R)-2-phosphoglycerate. Catalysis depends on Glu210, which acts as the Proton donor. 3 residues coordinate Mg(2+): Asp247, Glu292, and Asp319. 4 residues coordinate (2R)-2-phosphoglycerate: Lys344, Arg373, Ser374, and Lys395. The active-site Proton acceptor is Lys344.

Belongs to the enolase family. As to quaternary structure, component of the RNA degradosome, a multiprotein complex involved in RNA processing and mRNA degradation. Mg(2+) serves as cofactor.

It localises to the cytoplasm. Its subcellular location is the secreted. The protein resides in the cell surface. The catalysed reaction is (2R)-2-phosphoglycerate = phosphoenolpyruvate + H2O. Its pathway is carbohydrate degradation; glycolysis; pyruvate from D-glyceraldehyde 3-phosphate: step 4/5. In terms of biological role, catalyzes the reversible conversion of 2-phosphoglycerate (2-PG) into phosphoenolpyruvate (PEP). It is essential for the degradation of carbohydrates via glycolysis. This chain is Enolase, found in Blochmanniella floridana.